The chain runs to 252 residues: tRNA pseudouridine synthase A (252 aa).

Asp-54 (nucleophile) is an active-site residue. Substrate is bound at residue Tyr-112.

This sequence belongs to the tRNA pseudouridine synthase TruA family. As to quaternary structure, homodimer.

It carries out the reaction uridine(38/39/40) in tRNA = pseudouridine(38/39/40) in tRNA. In terms of biological role, formation of pseudouridine at positions 38, 39 and 40 in the anticodon stem and loop of transfer RNAs. The chain is tRNA pseudouridine synthase A from Oenococcus oeni (strain ATCC BAA-331 / PSU-1).